The sequence spans 335 residues: 3-hydroxyisobutyrate dehydrogenase, mitochondrial (335 aa).

A mitochondrion-targeting transit peptide spans 1 to 35 (MAASLGFRGAASGLWYWSGRRRPVGSLAAVCSRSM). An NAD(+)-binding site is contributed by 39–68 (TPVGFIGLGNMGNPMAKNLMKHGYPLILYD). Lysine 59, lysine 75, and lysine 78 each carry N6-acetyllysine; alternate. Residues lysine 59, lysine 75, and lysine 78 each carry the N6-succinyllysine; alternate modification. Lysine 94 is subject to N6-succinyllysine. Residues 102-103 (LP) and asparagine 107 each bind NAD(+). Position 120 is an N6-acetyllysine (lysine 120). Position 133 (threonine 133) interacts with NAD(+). An N6-succinyllysine modification is found at lysine 140. Lysine 144 carries the post-translational modification N6-acetyllysine. Lysine 148 bears the N6-acetyllysine; alternate mark. Lysine 148 is modified (N6-succinyllysine; alternate). Lysine 208 is a catalytic residue. N6-acetyllysine; alternate is present on residues lysine 237 and lysine 241. An N6-succinyllysine; alternate mark is found at lysine 237 and lysine 241. NAD(+) is bound at residue lysine 283. Lysine 296 carries the N6-succinyllysine modification. Lysine 320 carries the post-translational modification N6-acetyllysine; alternate. N6-succinyllysine; alternate is present on lysine 320.

The protein belongs to the HIBADH-related family. 3-hydroxyisobutyrate dehydrogenase subfamily. Homodimer.

The protein localises to the mitochondrion. The enzyme catalyses 3-hydroxy-2-methylpropanoate + NAD(+) = 2-methyl-3-oxopropanoate + NADH + H(+). The protein operates within amino-acid degradation; L-valine degradation. The sequence is that of 3-hydroxyisobutyrate dehydrogenase, mitochondrial (Hibadh) from Mus musculus (Mouse).